Consider the following 447-residue polypeptide: Multicopper oxidase mco (447 aa).

Residues 1 to 25 show a composition bias toward basic and acidic residues; it reads MMNMKEDKKNTMDMKNMKHHDERKK. The tract at residues 1–28 is disordered; it reads MMNMKEDKKNTMDMKNMKHHDERKKLNS. The Cu cation site is built by H107, H109, H147, H149, H375, H378, H380, H428, C429, H430, H434, and M439.

The protein belongs to the multicopper oxidase family. The cofactor is Cu cation.

It localises to the cytoplasm. Functionally, may be involved in copper homeostasis and oxidative stress response. This is Multicopper oxidase mco (mco) from Staphylococcus epidermidis (strain ATCC 12228 / FDA PCI 1200).